The chain runs to 418 residues: Glutamyl-tRNA reductase (418 aa).

Substrate-binding positions include 49–52, Ser-109, 114–116, and Gln-120; these read TCNR and EPQ. Catalysis depends on Cys-50, which acts as the Nucleophile. NADP(+) is bound at residue 189 to 194; sequence GAGETI.

It belongs to the glutamyl-tRNA reductase family. Homodimer.

It catalyses the reaction (S)-4-amino-5-oxopentanoate + tRNA(Glu) + NADP(+) = L-glutamyl-tRNA(Glu) + NADPH + H(+). It functions in the pathway porphyrin-containing compound metabolism; protoporphyrin-IX biosynthesis; 5-aminolevulinate from L-glutamyl-tRNA(Glu): step 1/2. Functionally, catalyzes the NADPH-dependent reduction of glutamyl-tRNA(Glu) to glutamate 1-semialdehyde (GSA). In Erwinia tasmaniensis (strain DSM 17950 / CFBP 7177 / CIP 109463 / NCPPB 4357 / Et1/99), this protein is Glutamyl-tRNA reductase.